The chain runs to 61 residues: Large ribosomal subunit protein bL32 (61 aa).

Residues 1–16 show a composition bias toward basic residues; the sequence is MAVPRRKTSPSRRGMR. Residues 1–61 are disordered; the sequence is MAVPRRKTSP…RQVLKVKKED (61 aa). Residues 17–44 are compositionally biased toward basic and acidic residues; the sequence is RSADALKKPTYVEDKDSGELRRPHHLDL.

The protein belongs to the bacterial ribosomal protein bL32 family.

This is Large ribosomal subunit protein bL32 from Afipia carboxidovorans (strain ATCC 49405 / DSM 1227 / KCTC 32145 / OM5) (Oligotropha carboxidovorans).